The following is a 131-amino-acid chain: NADH dehydrogenase [ubiquinone] 1 alpha subcomplex subunit 6 (131 aa).

It belongs to the complex I LYR family. As to quaternary structure, mammalian complex I is composed of 45 different subunits.

The protein resides in the mitochondrion inner membrane. Its function is as follows. Accessory subunit of the mitochondrial membrane respiratory chain NADH dehydrogenase (Complex I), that is believed to be not involved in catalysis. Required for proper complex I assembly. Complex I functions in the transfer of electrons from NADH to the respiratory chain. The immediate electron acceptor for the enzyme is believed to be ubiquinone. The sequence is that of NADH dehydrogenase [ubiquinone] 1 alpha subcomplex subunit 6 from Mus musculus (Mouse).